Consider the following 92-residue polypeptide: Protein AC152 (92 aa).

In terms of biological role, acts as a transactivator of AC102 and HE65 genes. Therefore, participates in the global recruitment of G-actin to the host nucleus. This Autographa californica nuclear polyhedrosis virus (AcMNPV) protein is Protein AC152 (AC152).